The following is a 127-amino-acid chain: Large ribosomal subunit protein bL19 (127 aa).

Belongs to the bacterial ribosomal protein bL19 family.

In terms of biological role, this protein is located at the 30S-50S ribosomal subunit interface and may play a role in the structure and function of the aminoacyl-tRNA binding site. The sequence is that of Large ribosomal subunit protein bL19 from Paraburkholderia phymatum (strain DSM 17167 / CIP 108236 / LMG 21445 / STM815) (Burkholderia phymatum).